A 663-amino-acid chain; its full sequence is Fructose-1,6-bisphosphatase class 3 1 (663 aa).

The protein belongs to the FBPase class 3 family. Mn(2+) serves as cofactor.

The enzyme catalyses beta-D-fructose 1,6-bisphosphate + H2O = beta-D-fructose 6-phosphate + phosphate. Its pathway is carbohydrate biosynthesis; gluconeogenesis. This Clostridium beijerinckii (strain ATCC 51743 / NCIMB 8052) (Clostridium acetobutylicum) protein is Fructose-1,6-bisphosphatase class 3 1.